The sequence spans 1131 residues: MSDQNNRSRNEYHSNRKNEPSYELQNAHSGLFHSSNEELTNRNQRYTNQNASMGSFTPVQSLQFPEQSQQTNMLYNGDDGNNNTINDNERDIYGGFVNHHRQRPPPATAEYNDVFNTNSQQLPSEHQYNNVPSYPLPSINVIQTTPELIHNGSQTMATPIERPFFNENDYYYNNRNSRTSPSIASSSDGYADQEARPILEQPNNNMNSGNIPQYHDQPFGYNNGYHGLQAKDYYDDPEGGYIDQRGDDYQINSYLGRNGEMVDPYDYENSLRHMTPMERREYLHDDSRPVNDGKEELDSVKSGYSHRDLGEYDKDDFSRDDEYDDLNTIDKLQFQANGVPASSSVSSIGSKESDIIVSNDNLTANRALKRSGTEIRKFKLWNGNFVFDSPISKTLLDQYATTTENANTLPNEFKFMRYQAVTCEPNQLAEKNFTVRQLKYLTPRETELMLVVTMYNEDHILLGRTLKGIMDNVKYMVKKKNSSTWGPDAWKKIVVCIISDGRSKINERSLALLSSLGCYQDGFAKDEINEKKVAMHVYEHTTMINITNISESEVSLECNQGTVPIQLLFCLKEQNQKKINSHRWAFEGFAELLRPNIVTLLDAGTMPGKDSIYQLWREFRNPNVGGACGEIRTDLGKRFVKLLNPLVASQNFEYKMSNILDKTTESNFGFITVLPGAFSAYRFEAVRGQPLQKYFYGEIMENEGFHFFSSNMYLAEDRILCFEVVTKKNCNWILKYCRSSYASTDVPERVPEFILQRRRWLNGSFFASVYSFCHFYRVWSSGHNIGRKLLLTVEFFYLFFNTLISWFSLSSFFLVFRILTVSIALAYHSAFNVLSVIFLWLYGICTLSTFILSLGNKPKSTEKFYVLTCVIFAVMMIYMIFCSIFMSVKSFQNILKNDTISFEGLITTEAFRDIVISLGSTYCLYLISSIIYLQPWHMLTSFIQYILLSPSYINVLNIYAFCNVHDLSWGTKGAMANPLGKINTTEDGTFKMEVLVSSSEIQANYDKYLKVLNDFDPKSESRPTEPSYDEKKTGYYANVRSLVIIFWVITNFIIVAVVLETGGIADYIAMKSISTDDTLETAKKAEIPLMTSKASIYFNVILWLVALSALIRFIGCSIYMIVRFFKKVTFR.

The span at 1-20 shows a compositional bias: basic and acidic residues; that stretch reads MSDQNNRSRNEYHSNRKNEP. A disordered region spans residues 1–22; the sequence is MSDQNNRSRNEYHSNRKNEPSY. Residues Ser-34, Ser-35, Ser-270, Ser-299, and Ser-318 each carry the phosphoserine modification. Residues 282-305 form a disordered region; that stretch reads YLHDDSRPVNDGKEELDSVKSGYS. Thr-328 carries the post-translational modification Phosphothreonine. Phosphoserine is present on Ser-358. Transmembrane regions (helical) follow at residues 795 to 815, 833 to 853, 866 to 886, 914 to 934, 942 to 962, 1042 to 1062, and 1101 to 1121; these read FFYL…FFLV, VLSV…FILS, VLTC…SIFM, IVIS…IYLQ, FIQY…YAFC, LVII…LETG, and ILWL…IYMI.

It belongs to the chitin synthase family.

It is found in the cell membrane. The catalysed reaction is [(1-&gt;4)-N-acetyl-beta-D-glucosaminyl](n) + UDP-N-acetyl-alpha-D-glucosamine = [(1-&gt;4)-N-acetyl-beta-D-glucosaminyl](n+1) + UDP + H(+). Its activity is regulated as follows. Requires proteolytic activation. Its function is as follows. Polymerizes chitin, a structural polymer of the cell wall and septum, by transferring the sugar moiety of UDP-GlcNAc to the non-reducing end of the growing chitin polymer. Required for mitotic division septum formation during adverse conditions. This chain is Chitin synthase 1 (CHS1), found in Saccharomyces cerevisiae (strain ATCC 204508 / S288c) (Baker's yeast).